The sequence spans 795 residues: Phenylalanine--tRNA ligase beta subunit (795 aa).

Residues 39 to 148 enclose the tRNA-binding domain; sequence AGTFNGVVVG…LDAPIGTDLR (110 aa). A B5 domain is found at 401–476; the sequence is PKVNTVQLRR…RIYGYNSIPN (76 aa). 4 residues coordinate Mg(2+): Asp-454, Asp-460, Glu-463, and Glu-464. The FDX-ACB domain maps to 701 to 794; it reads SKFPANRRDL…VKQRFNAELR (94 aa).

Belongs to the phenylalanyl-tRNA synthetase beta subunit family. Type 1 subfamily. As to quaternary structure, tetramer of two alpha and two beta subunits. Requires Mg(2+) as cofactor.

It is found in the cytoplasm. The enzyme catalyses tRNA(Phe) + L-phenylalanine + ATP = L-phenylalanyl-tRNA(Phe) + AMP + diphosphate + H(+). The sequence is that of Phenylalanine--tRNA ligase beta subunit from Haemophilus influenzae (strain 86-028NP).